The sequence spans 306 residues: Agmatinase (306 aa).

Positions 126, 149, 151, 153, 230, and 232 each coordinate Mn(2+).

The protein belongs to the arginase family. Agmatinase subfamily. Requires Mn(2+) as cofactor.

It carries out the reaction agmatine + H2O = urea + putrescine. Its pathway is amine and polyamine biosynthesis; putrescine biosynthesis via agmatine pathway; putrescine from agmatine: step 1/1. Its function is as follows. Catalyzes the formation of putrescine from agmatine. In Shigella boydii serotype 18 (strain CDC 3083-94 / BS512), this protein is Agmatinase.